The chain runs to 673 residues: Probable lysophospholipase 4 (673 aa).

An N-terminal signal peptide occupies residues 1–19 (MYVNYIGLFAFVQISLTLA). Residues Asn72, Asn125, Asn191, Asn194, Asn272, Asn301, Asn374, Asn404, Asn409, Asn481, Asn516, Asn545, and Asn574 are each glycosylated (N-linked (GlcNAc...) asparagine). Residues 74–615 (TCSNDNLLRP…QEYCWDGTLA (542 aa)) form the PLA2c domain. The tract at residues 631-653 (TTSRAPSGTTSGTASSTTSSSVA) is disordered.

It belongs to the lysophospholipase family.

The protein resides in the secreted. It catalyses the reaction a 1-acyl-sn-glycero-3-phosphocholine + H2O = sn-glycerol 3-phosphocholine + a fatty acid + H(+). Its function is as follows. Catalyzes the release of fatty acids from lysophospholipids. This is Probable lysophospholipase 4 (plb4) from Schizosaccharomyces pombe (strain 972 / ATCC 24843) (Fission yeast).